The following is a 295-amino-acid chain: Pyridoxal 5'-phosphate synthase subunit PdxS (295 aa).

Aspartate 25 is a binding site for D-ribose 5-phosphate. Catalysis depends on lysine 82, which acts as the Schiff-base intermediate with D-ribose 5-phosphate. A D-ribose 5-phosphate-binding site is contributed by glycine 154. Arginine 166 provides a ligand contact to D-glyceraldehyde 3-phosphate. Residues glycine 215 and 236 to 237 contribute to the D-ribose 5-phosphate site; that span reads GS.

This sequence belongs to the PdxS/SNZ family. In terms of assembly, in the presence of PdxT, forms a dodecamer of heterodimers.

The enzyme catalyses aldehydo-D-ribose 5-phosphate + D-glyceraldehyde 3-phosphate + L-glutamine = pyridoxal 5'-phosphate + L-glutamate + phosphate + 3 H2O + H(+). Its pathway is cofactor biosynthesis; pyridoxal 5'-phosphate biosynthesis. Catalyzes the formation of pyridoxal 5'-phosphate from ribose 5-phosphate (RBP), glyceraldehyde 3-phosphate (G3P) and ammonia. The ammonia is provided by the PdxT subunit. Can also use ribulose 5-phosphate and dihydroxyacetone phosphate as substrates, resulting from enzyme-catalyzed isomerization of RBP and G3P, respectively. This Staphylococcus haemolyticus (strain JCSC1435) protein is Pyridoxal 5'-phosphate synthase subunit PdxS.